Reading from the N-terminus, the 179-residue chain is MNELKQKYQDEIVSSLMDKFNYNSVMEVPKVEKIVINMGVGDAVQNSKALDSAVEELSLISGQKPMITRAKKSIAGFRLREGMPIGAKVTLRGERMYEFLQKLVAVSLPRVRDFRGISKKAFDGRGNYTLGVKEQLIFPEINYDKVSKIRGMDIVVVTTSNTDEEARELLAQLGMPFQK.

The protein belongs to the universal ribosomal protein uL5 family. As to quaternary structure, part of the 50S ribosomal subunit; part of the 5S rRNA/L5/L18/L25 subcomplex. Contacts the 5S rRNA and the P site tRNA. Forms a bridge to the 30S subunit in the 70S ribosome.

Its function is as follows. This is one of the proteins that bind and probably mediate the attachment of the 5S RNA into the large ribosomal subunit, where it forms part of the central protuberance. In the 70S ribosome it contacts protein S13 of the 30S subunit (bridge B1b), connecting the 2 subunits; this bridge is implicated in subunit movement. Contacts the P site tRNA; the 5S rRNA and some of its associated proteins might help stabilize positioning of ribosome-bound tRNAs. This is Large ribosomal subunit protein uL5 from Oceanobacillus iheyensis (strain DSM 14371 / CIP 107618 / JCM 11309 / KCTC 3954 / HTE831).